Reading from the N-terminus, the 156-residue chain is Endoribonuclease YbeY (156 aa).

Residues His-122, His-126, and His-132 each coordinate Zn(2+).

It belongs to the endoribonuclease YbeY family. It depends on Zn(2+) as a cofactor.

It localises to the cytoplasm. Single strand-specific metallo-endoribonuclease involved in late-stage 70S ribosome quality control and in maturation of the 3' terminus of the 16S rRNA. This chain is Endoribonuclease YbeY, found in Symbiobacterium thermophilum (strain DSM 24528 / JCM 14929 / IAM 14863 / T).